A 98-amino-acid polypeptide reads, in one-letter code: Major carboxysome shell protein CsoS1A (98 aa).

A BMC domain is found at 8–93; sequence ALGMIETRGL…VHSEVENILP (86 aa).

It belongs to the bacterial microcompartments protein family. CsoS1 subfamily. Homohexamer with a small central pore; the concave side is mostly positive electrostatic potential, whereas the convex side is mostly negative electrostatic potential. Forms a CsoS2-CsoS1-RuBisCO complex. Interacts with the N-terminus (residues 1-136) of RuBisCO (CbbL).

The protein resides in the carboxysome. Its function is as follows. The major shell protein of the carboxysome, a polyhedral inclusion where RuBisCO (ribulose bisphosphate carboxylase, ccbL-ccbS) is sequestered. Assembles into hexamers which make sheets that form the facets of the polyhedral carboxysome. The shell probably limits the diffusion of CO(2) into and out of the carboxysome. Molecular modeling shows the central pore of this protein is selectively permeable to anions such as HCO(3) rather than CO(2) or O(2). There are estimated to be 2970 CsoS1A/CsoS1C proteins per carboxysome (the proteins differ by only 1 residue). Functionally, unlike beta-carboxysomes, alpha-carboxysomes (Cb) can form without cargo protein. CsoS2 is essential for Cb formation and is also capable of targeting foreign proteins to the Cb. The Cb shell assembles with the aid of CsoS2; CsoS1A, CsoS1B and CsoS1C form the majority of the shell while CsoS4A and CsoS4B form vertices. CsoS1D forms pseudohexamers that probably control metabolite flux into and out of the shell. This chain is Major carboxysome shell protein CsoS1A, found in Halothiobacillus neapolitanus (strain ATCC 23641 / c2) (Thiobacillus neapolitanus).